Reading from the N-terminus, the 569-residue chain is Ribonuclease J (569 aa).

The Zn(2+) site is built by H81, H83, D85, H86, H150, and D172. 373-377 (HASGH) contributes to the substrate binding site. H399 lines the Zn(2+) pocket.

Belongs to the metallo-beta-lactamase superfamily. RNA-metabolizing metallo-beta-lactamase-like family. Bacterial RNase J subfamily. Homodimer, may be a subunit of the RNA degradosome. The cofactor is Zn(2+).

The protein localises to the cytoplasm. In terms of biological role, an RNase that has 5'-3' exonuclease and possibly endoonuclease activity. Involved in maturation of rRNA and in some organisms also mRNA maturation and/or decay. This is Ribonuclease J from Mycoplasma pneumoniae (strain ATCC 29342 / M129 / Subtype 1) (Mycoplasmoides pneumoniae).